A 223-amino-acid polypeptide reads, in one-letter code: MKVAIIRFPGTNCEFDTTYAFEKLGVKTQIVWHEEKEFDADLVVLPGGFSYGDYLRCAAIAKLAPAMQGVFNHAKKGGYILGICNGFQILLESGLLKGAMKHNNNLSFISKNQSLRVVSNDNAFLKNFKKDEIINLPIAHGEGNYYADETTLKELQDKDLIILKYEPNPNGSVFDIAGICDENKKIFGLMPHPERACEKVLGNDVGLKMLKGFLLENFINFNF.

In terms of domain architecture, Glutamine amidotransferase type-1 spans 2-223 (KVAIIRFPGT…LLENFINFNF (222 aa)). The active-site Nucleophile is the Cys-84. Residues His-192 and Glu-194 contribute to the active site.

In terms of assembly, part of the FGAM synthase complex composed of 1 PurL, 1 PurQ and 2 PurS subunits.

It localises to the cytoplasm. The enzyme catalyses N(2)-formyl-N(1)-(5-phospho-beta-D-ribosyl)glycinamide + L-glutamine + ATP + H2O = 2-formamido-N(1)-(5-O-phospho-beta-D-ribosyl)acetamidine + L-glutamate + ADP + phosphate + H(+). The catalysed reaction is L-glutamine + H2O = L-glutamate + NH4(+). It functions in the pathway purine metabolism; IMP biosynthesis via de novo pathway; 5-amino-1-(5-phospho-D-ribosyl)imidazole from N(2)-formyl-N(1)-(5-phospho-D-ribosyl)glycinamide: step 1/2. Functionally, part of the phosphoribosylformylglycinamidine synthase complex involved in the purines biosynthetic pathway. Catalyzes the ATP-dependent conversion of formylglycinamide ribonucleotide (FGAR) and glutamine to yield formylglycinamidine ribonucleotide (FGAM) and glutamate. The FGAM synthase complex is composed of three subunits. PurQ produces an ammonia molecule by converting glutamine to glutamate. PurL transfers the ammonia molecule to FGAR to form FGAM in an ATP-dependent manner. PurS interacts with PurQ and PurL and is thought to assist in the transfer of the ammonia molecule from PurQ to PurL. The protein is Phosphoribosylformylglycinamidine synthase subunit PurQ of Campylobacter jejuni subsp. jejuni serotype O:2 (strain ATCC 700819 / NCTC 11168).